A 371-amino-acid chain; its full sequence is Gustatory and pheromone receptor 39a, isoform A (371 aa).

The Cytoplasmic segment spans residues 1–41 (MSKVCRDLRIYLRLLHIMGMMCWHFDSDHCQLVATSGSERY). Residues 42–62 (AVVYAGCILVSTTAGFIFALL) form a helical membrane-spanning segment. At 63–80 (HPSRFHIAIYNQTGNFYE) the chain is on the extracellular side. An N-linked (GlcNAc...) asparagine glycan is attached at N73. The chain crosses the membrane as a helical span at residues 81-101 (AVIFRSTCVVLFLVYVILYAW). Residues 102-127 (RHRYRDLVQHILRLNRRCASSCTNQQ) lie on the Cytoplasmic side of the membrane. Residues 128 to 148 (FLHNIILYGMLTILCFGNYLH) form a helical membrane-spanning segment. Topologically, residues 149–161 (GYTRAGLATLPLA) are extracellular. A helical membrane pass occupies residues 162–182 (LCMLVYIFAFLVLCLLLMFFV). Topologically, residues 183–228 (SLKQVMTAGLIHYNQQLCQGDLISGLRGRQQILKLCGGELNECFGL) are cytoplasmic. The chain crosses the membrane as a helical span at residues 229–249 (LMLPIVALVLLMAPSGPFFLI). Residues 250 to 263 (STVLEGKFRPDECL) are Extracellular-facing. The chain crosses the membrane as a helical span at residues 264 to 284 (IMLLTSSTWDTPWMIMLVLML). Residues 285 to 340 (RTNGISEEANKTAKMLTKVPRTGTGLDRMIEKFLLKNLRQKPILTAYGFFALDKST) lie on the Cytoplasmic side of the membrane. A helical membrane pass occupies residues 341 to 361 (LFKLFTAIFTYMVILVQFKEM). The Extracellular segment spans residues 362 to 371 (ENSTKSINKF). An N-linked (GlcNAc...) asparagine glycan is attached at N363.

The protein belongs to the insect chemoreceptor superfamily. Gustatory receptor (GR) family. Gr21a subfamily. As to expression, expressed in the adult labellar chemosensory neurons, and adult thorax and wing. In larvae, is expressed in neurons of the posterior pharyngeal sense organ.

The protein resides in the cell membrane. Its function is as follows. Gustatory receptor which mediates acceptance or avoidance behavior, depending on its substrates. Plays a role in sustaining courtship behavior in males, possibly through the reception of a stimulating arrestant pheromone. This chain is Gustatory and pheromone receptor 39a, isoform A (Gr39a), found in Drosophila melanogaster (Fruit fly).